The primary structure comprises 401 residues: Mannonate dehydratase (401 aa).

The protein belongs to the mannonate dehydratase family. Fe(2+) is required as a cofactor. The cofactor is Mn(2+).

The catalysed reaction is D-mannonate = 2-dehydro-3-deoxy-D-gluconate + H2O. Its pathway is carbohydrate metabolism; pentose and glucuronate interconversion. Catalyzes the dehydration of D-mannonate. This Brucella melitensis biotype 2 (strain ATCC 23457) protein is Mannonate dehydratase.